The following is a 120-amino-acid chain: MSITKDQIIEAVASMSVMEVVELIEAMEEKFGVSAAVAVAAGPAAEAVEEKTEFDVVLTAAGANKVAVIKAVRAATGLGLKEAKDLVEAAPANLKEAISKDEAETLKKQLEEAGASVEIK.

It belongs to the bacterial ribosomal protein bL12 family. As to quaternary structure, homodimer. Part of the ribosomal stalk of the 50S ribosomal subunit. Forms a multimeric L10(L12)X complex, where L10 forms an elongated spine to which 2 to 4 L12 dimers bind in a sequential fashion. Binds GTP-bound translation factors.

Functionally, forms part of the ribosomal stalk which helps the ribosome interact with GTP-bound translation factors. Is thus essential for accurate translation. The chain is Large ribosomal subunit protein bL12 from Aeromonas salmonicida (strain A449).